A 369-amino-acid chain; its full sequence is uncharacterized protein (369 aa).

Disordered regions lie at residues 1 to 42, 60 to 107, 146 to 177, and 214 to 369; these read MRAA…NNNS, PSDL…KEDD, ALSM…NSSG, and LSSH…GDDD. Polar residues predominate over residues 12 to 24; sequence VGPNNNNQSNTIN. Low complexity-rich tracts occupy residues 30–42 and 70–86; these read SNSN…NNNS and YHSN…NSSS. Polar residues predominate over residues 87 to 101; that stretch reads AITSGTVAPSSSMNN. Residues 155–169 are compositionally biased toward acidic residues; sequence DSESDISEKEDDNDG. Low complexity predominate over residues 219 to 324; the sequence is NNNNNSSNNN…NNNNNNSNIY (106 aa).

This is an uncharacterized protein from Dictyostelium discoideum (Social amoeba).